Consider the following 276-residue polypeptide: Adenylate kinase (276 aa).

Residue 51–56 (GAGKGT) participates in ATP binding. The NMP stretch occupies residues 71-100 (ATGDMLRSQVAKKTPLGQAAKKIMDAGGLV). AMP contacts are provided by residues threonine 72, arginine 77, 98–100 (GLV), 127–130 (GFPR), and glutamine 134. Positions 168–205 (GRLVHPASGRSYHVKFNPPKKEMTDDITGEPLIQRSDD) are LID. ATP-binding positions include arginine 169 and 178 to 179 (SY). AMP is bound by residues arginine 202 and arginine 213. ATP is bound at residue glutamine 241.

Belongs to the adenylate kinase family. AK2 subfamily. In terms of assembly, monomer.

It localises to the cytoplasm. It is found in the cytosol. The protein localises to the mitochondrion intermembrane space. The catalysed reaction is AMP + ATP = 2 ADP. Its function is as follows. Catalyzes the reversible transfer of the terminal phosphate group between ATP and AMP. Plays an important role in cellular energy homeostasis and in adenine nucleotide metabolism. Adenylate kinase activity is critical for regulation of the phosphate utilization and the AMP de novo biosynthesis pathways. The polypeptide is Adenylate kinase (Podospora anserina (strain S / ATCC MYA-4624 / DSM 980 / FGSC 10383) (Pleurage anserina)).